The primary structure comprises 146 residues: 3-dehydroquinate dehydratase (146 aa).

Y24 acts as the Proton acceptor in catalysis. The substrate site is built by N75, H81, and D88. The active-site Proton donor is H101. Substrate is bound by residues 102–103 (LS) and R112.

Belongs to the type-II 3-dehydroquinase family. Homododecamer.

It catalyses the reaction 3-dehydroquinate = 3-dehydroshikimate + H2O. The protein operates within metabolic intermediate biosynthesis; chorismate biosynthesis; chorismate from D-erythrose 4-phosphate and phosphoenolpyruvate: step 3/7. In terms of biological role, catalyzes a trans-dehydration via an enolate intermediate. In Caulobacter vibrioides (strain ATCC 19089 / CIP 103742 / CB 15) (Caulobacter crescentus), this protein is 3-dehydroquinate dehydratase.